Reading from the N-terminus, the 463-residue chain is L-seryl-tRNA(Sec) selenium transferase (463 aa).

K295 is subject to N6-(pyridoxal phosphate)lysine.

It belongs to the SelA family. In terms of assembly, homodecamer; pentamer of dimers. Binds only one seryl-tRNA(Sec) per dimer. The cofactor is pyridoxal 5'-phosphate.

The protein localises to the cytoplasm. The catalysed reaction is L-seryl-tRNA(Sec) + selenophosphate + H(+) = L-selenocysteinyl-tRNA(Sec) + phosphate. It participates in aminoacyl-tRNA biosynthesis; selenocysteinyl-tRNA(Sec) biosynthesis; selenocysteinyl-tRNA(Sec) from L-seryl-tRNA(Sec) (bacterial route): step 1/1. Functionally, converts seryl-tRNA(Sec) to selenocysteinyl-tRNA(Sec) required for selenoprotein biosynthesis. The protein is L-seryl-tRNA(Sec) selenium transferase of Serratia proteamaculans (strain 568).